The primary structure comprises 453 residues: Anthocyanidin 3-O-glucosyltransferase (453 aa).

Residue His17 is the Proton acceptor of the active site. Residue His17 participates in an anthocyanidin binding. Asp117 acts as the Charge relay in catalysis. Position 139 (Thr139) interacts with UDP-alpha-D-glucose. His148 is a binding site for an anthocyanidin. The UDP-alpha-D-glucose site is built by Ala331, Gln333, His348, Trp351, Asn352, Ser353, and Glu356. Gly371 is a binding site for an anthocyanidin. 2 residues coordinate UDP-alpha-D-glucose: Asp372 and Gln373.

It belongs to the UDP-glycosyltransferase family.

The enzyme catalyses an anthocyanidin + UDP-alpha-D-glucose + H(+) = an anthocyanidin 3-O-beta-D-glucoside + UDP. The catalysed reaction is delphinidin + UDP-alpha-D-glucose = delphinidin 3-O-beta-D-glucoside + UDP. It catalyses the reaction pelargonidin + UDP-alpha-D-glucose = pelargonidin 3-O-beta-D-glucoside + UDP. It carries out the reaction cyanidin + UDP-alpha-D-glucose = cyanidin 3-O-beta-D-glucoside + UDP + H(+). The protein operates within pigment biosynthesis; anthocyanin biosynthesis. Its function is as follows. In the presence of other necessary color factors, this glycosylation reaction allows the accumulation of anthocyanin pigments. Anthocyanidins are the preferred substrates, while flavonols are only a minor substrate in vitro. The chain is Anthocyanidin 3-O-glucosyltransferase from Gentiana triflora (Clustered gentian).